The following is a 60-amino-acid chain: Temporin-CG2 (60 aa).

An N-terminal signal peptide occupies residues 1 to 22; sequence MFTLKKPLLVLFFLATINLSLC. The propeptide at 23-43 is removed in mature form; sequence EQERNAEEERRDDDERNVEVE.

As to expression, expressed by the skin glands.

It localises to the secreted. Functionally, antimicrobial peptide active against a variety of Gram-positive bacterial strains but not against Gram-negative bacteria. Has weak antifungal activity against a slime mold isolate. Has weak hemolytic activity against human erythrocytes. This chain is Temporin-CG2, found in Amolops chunganensis (Chungan torrent frog).